Reading from the N-terminus, the 431-residue chain is Ribosomal RNA small subunit methyltransferase B (431 aa).

S-adenosyl-L-methionine-binding positions include Cys254–Lys260, Asp277, Asp303, and Asp322. The active-site Nucleophile is the Cys375. The tract at residues Leu398–Glu417 is disordered. Over residues Thr403–Leu412 the composition is skewed to polar residues.

This sequence belongs to the class I-like SAM-binding methyltransferase superfamily. RsmB/NOP family.

It localises to the cytoplasm. It carries out the reaction cytidine(967) in 16S rRNA + S-adenosyl-L-methionine = 5-methylcytidine(967) in 16S rRNA + S-adenosyl-L-homocysteine + H(+). Specifically methylates the cytosine at position 967 (m5C967) of 16S rRNA. This Klebsiella pneumoniae (strain 342) protein is Ribosomal RNA small subunit methyltransferase B.